Reading from the N-terminus, the 149-residue chain is Large ribosomal subunit protein uL15C (149 aa).

The tract at residues 21 to 40 (RIGKHRKQRGGRGNAGGQHH) is disordered.

This sequence belongs to the universal ribosomal protein uL15 family. In terms of assembly, component of the large ribosomal subunit.

It is found in the cytoplasm. The protein localises to the cytosol. It localises to the endoplasmic reticulum. In terms of biological role, component of the large ribosomal subunit. The ribosome is a large ribonucleoprotein complex responsible for the synthesis of proteins in the cell. The sequence is that of Large ribosomal subunit protein uL15C (rpl27a-3) from Entamoeba histolytica (strain ATCC 30459 / HM-1:IMSS / ABRM).